Consider the following 631-residue polypeptide: Nucleoside triphosphatase I (631 aa).

Residues 42 to 204 (FLGLDSMHSL…TMLVNLLRPG (163 aa)) enclose the Helicase ATP-binding domain. 55-62 (HETGVGKT) contributes to the ATP binding site. Residues 141 to 144 (DECH) carry the DEXH box motif. Residues 367 to 532 (KFIDVCLGIL…EFVQLFRVFK (166 aa)) form the Helicase C-terminal domain. The segment at 457–524 (DIFILDMTWN…EIIQSKSKEF (68 aa)) is binding to the cap-specific mRNA (nucleoside-2'-O-)-methyltransferase.

It belongs to the helicase family. NPH I subfamily. Monomer. Interacts (via C-terminus) with RAP94/OPG109 (via N-terminus). Interacts with the cap-specific mRNA (nucleoside-2'-O-)-methyltransferase OPG102.

It localises to the virion. It catalyses the reaction a ribonucleoside 5'-triphosphate + H2O = a ribonucleoside 5'-diphosphate + phosphate + H(+). Its function is as follows. DNA-dependent ATPase that acts as a 5' to 3' translocase on single-stranded DNA and thereby plays a role in transcription termination of viral early genes. Uses forward translocation in concert with the viral RNA polymerase RAP94/OPG109 subunit and the capping enzyme/VTF to catalyze release of UUUUUNU-containing nascent RNA from the elongation complex. In addition, acts as a positive elongation factor to assist transcription through problematic sequences. The chain is Nucleoside triphosphatase I (OPG123) from Variola virus (isolate Human/India/Ind3/1967) (VARV).